The primary structure comprises 518 residues: Adenine deaminase (518 aa).

This sequence belongs to the metallo-dependent hydrolases superfamily. Adenine deaminase family. Mn(2+) is required as a cofactor.

It catalyses the reaction adenine + H2O + H(+) = hypoxanthine + NH4(+). This chain is Adenine deaminase, found in Methanoculleus marisnigri (strain ATCC 35101 / DSM 1498 / JR1).